The sequence spans 655 residues: Potassium voltage-gated channel subfamily A member 4 (655 aa).

Residues 1–306 (MEVAMVSAES…LLFEYPESSS (306 aa)) are Cytoplasmic-facing. The segment at 24–153 (QARARERERL…SEEDHGDGCS (130 aa)) is disordered. Residues 36-50 (SRAAAAAAVAAATAA) are compositionally biased toward low complexity. Positions 81–90 (GSREEEATRT) are enriched in basic and acidic residues. Over residues 91-100 (EKKKKLHHRQ) the composition is skewed to basic residues. At serine 123 the chain carries Phosphoserine. Residues 123–138 (SEEEEDEEEEEEEEEE) are compositionally biased toward acidic residues. The span at 139–150 (GRFYYSEEDHGD) shows a compositional bias: basic and acidic residues. The chain crosses the membrane as a helical span at residues 307–328 (PARGIAIVSVLVILISIVIFCL). The Extracellular portion of the chain corresponds to 329–372 (ETLPEFRDDRDLIMALSAGGHSRLLNDTSAPHLENSGHTIFNDP). A glycan (N-linked (GlcNAc...) asparagine) is linked at asparagine 354. A helical transmembrane segment spans residues 373-394 (FFIVETVCIVWFSFEFVVRCFA). Over 395-405 (CPSQALFFKNI) the chain is Cytoplasmic. The chain crosses the membrane as a helical span at residues 406-426 (MNIIDIVSILPYFITLGTDLA). Residues 427–441 (QQQGGGNGQQQQAMS) lie on the Extracellular side of the membrane. A helical; Voltage-sensor transmembrane segment spans residues 442–462 (FAILRIIRLVRVFRIFKLSRH). At 463-477 (SKGLQILGHTLRASM) the chain is on the cytoplasmic side. Positions 464-477 (KGLQILGHTLRASM) are S4-S5 linker. The helical transmembrane segment at 478–499 (RELGLLIFFLFIGVILFSSAVY) threads the bilayer. At 500-513 (FAEADEPTTHFQSI) the chain is on the extracellular side. The segment at residues 514 to 525 (PDAFWWAVVTMT) is an intramembrane region (helical). The Selectivity filter signature appears at 526 to 531 (TVGYGD). An intramembrane segment occupies 526–533 (TVGYGDMK). Topologically, residues 534–540 (PITVGGK) are extracellular. The chain crosses the membrane as a helical span at residues 541–569 (IVGSLCAIAGVLTIALPVPVIVSNFNYFY). The Cytoplasmic segment spans residues 570–655 (HRETENEEQT…SNAKAVETDV (86 aa)). Serine 601 carries the phosphoserine; by PKA modification. The span at 631-642 (CQGKGDDSETDK) shows a compositional bias: basic and acidic residues. Residues 631-655 (CQGKGDDSETDKNNCSNAKAVETDV) form a disordered region. Positions 653–655 (TDV) match the PDZ-binding motif.

It belongs to the potassium channel family. A (Shaker) (TC 1.A.1.2) subfamily. Kv1.4/KCNA4 sub-subfamily. Homotetramer and heterotetramer of potassium channel proteins. Interacts with KCNAB1 and KCNAB2. Interacts with DLG1, DLG2 and DLG4 via their PDZ domains. Interacts with SIGMAR1. Part of a complex containing KCNA1, KCNAB1 and LGI1. Detected in a complex with KCNA1. Interacts with KCNA2. Interacts (via cytoplasmic N-terminal domain) with KCNRG. N-glycosylated. Detected in brain (at protein level). Heart and brain.

The protein localises to the cell membrane. The protein resides in the cell projection. It is found in the axon. It catalyses the reaction K(+)(in) = K(+)(out). In terms of biological role, voltage-gated potassium channel that mediates transmembrane potassium transport in excitable membranes. Forms tetrameric potassium-selective channels through which potassium ions pass in accordance with their electrochemical gradient. The channel alternates between opened and closed conformations in response to the voltage difference across the membrane. Can form functional homotetrameric channels and heterotetrameric channels that contain variable proportions of KCNA1, KCNA2, KCNA4, KCNA5, and possibly other family members as well; channel properties depend on the type of alpha subunits that are part of the channel. Channel properties are modulated by cytoplasmic beta subunits that regulate the subcellular location of the alpha subunits and promote rapid inactivation. In vivo, membranes probably contain a mixture of heteromeric potassium channel complexes, making it difficult to assign currents observed in intact tissues to any particular potassium channel family member. Homotetrameric KCNA4 forms a potassium channel that opens in response to membrane depolarization, followed by rapid spontaneous channel closure. Likewise, a heterotetrameric channel formed by KCNA1 and KCNA4 shows rapid inactivation. The sequence is that of Potassium voltage-gated channel subfamily A member 4 (Kcna4) from Rattus norvegicus (Rat).